The chain runs to 852 residues: Mannosyl-oligosaccharide glucosidase GCS1 (852 aa).

Residues 1–31 form a disordered region; sequence MTGASRRSARGRIKSSSLSPGSDEGSAYPPS. The Cytoplasmic portion of the chain corresponds to 1–51; that stretch reads MTGASRRSARGRIKSSSLSPGSDEGSAYPPSIRRGKGKELVSIGAFKTNLK. Positions 6-12 match the Endoplasmic reticulum targeting motif; it reads RRSARGR. Over residues 15–26 the composition is skewed to low complexity; that stretch reads SSSLSPGSDEGS. The chain crosses the membrane as a helical; Signal-anchor for type II membrane protein span at residues 52-72; sequence ILVGLIILGIIVIYFVINRLV. Over 73–852 the chain is Lumenal; sequence RHGLLFDESQ…LIMSEDYPIF (780 aa). The required for endoplasmic reticulum targeting stretch occupies residues 91-150; it reads PAPKVMDLSMFQGEHKESLYWGTYRPHVYFGVRARTPLSLVAGLMWLGVKDEMYVMRHFC. N-linked (GlcNAc...) asparagine glycosylation is found at Asn-282, Asn-552, and Asn-570. The span at 574–583 shows a compositional bias: polar residues; it reads QELNPKTLSS. The segment at 574-593 is disordered; sequence QELNPKTLSSGLDDYPRASH. Catalysis depends on Asp-586, which acts as the Proton donor. 3 N-linked (GlcNAc...) asparagine glycosylation sites follow: Asn-633, Asn-662, and Asn-730. Catalysis depends on Glu-819, which acts as the Proton acceptor.

The protein belongs to the glycosyl hydrolase 63 family. As to expression, constitutively expressed in roots, stems, leaves, flowers and siliques.

It localises to the endoplasmic reticulum membrane. The catalysed reaction is N(4)-(alpha-D-Glc-(1-&gt;2)-alpha-D-Glc-(1-&gt;3)-alpha-D-Glc-(1-&gt;3)-alpha-D-Man-(1-&gt;2)-alpha-D-Man-(1-&gt;2)-alpha-D-Man-(1-&gt;3)-[alpha-D-Man-(1-&gt;2)-alpha-D-Man-(1-&gt;3)-[alpha-D-Man-(1-&gt;2)-alpha-D-Man-(1-&gt;6)]-alpha-D-Man-(1-&gt;6)]-beta-D-Man-(1-&gt;4)-beta-D-GlcNAc-(1-&gt;4)-beta-D-GlcNAc)-L-asparaginyl-[protein] + H2O = N(4)-(alpha-D-Glc-(1-&gt;3)-alpha-D-Glc-(1-&gt;3)-alpha-D-Man-(1-&gt;2)-alpha-D-Man-(1-&gt;2)-alpha-D-Man-(1-&gt;3)-[alpha-D-Man-(1-&gt;2)-alpha-D-Man-(1-&gt;3)-[alpha-D-Man-(1-&gt;2)-alpha-D-Man-(1-&gt;6)]-alpha-D-Man-(1-&gt;6)]-beta-D-Man-(1-&gt;4)-beta-D-GlcNAc-(1-&gt;4)-beta-D-GlcNAc)-L-asparaginyl-[protein] + beta-D-glucose. The protein operates within glycan metabolism; N-glycan degradation. In terms of biological role, cleaves the distal alpha 1,2-linked glucose residue from the Glc(3)Man(9)GlcNAc(2) oligosaccharide precursor. Required for the accumulation of seed storage proteins, the formation of protein bodies, cell differentiation, cellulose biosynthesis and organization (in cell walls), cell shape determination and organization (e.g. epidermal cells), and embryo development. Involved in root development. In Arabidopsis thaliana (Mouse-ear cress), this protein is Mannosyl-oligosaccharide glucosidase GCS1 (GCS1).